We begin with the raw amino-acid sequence, 391 residues long: Galactokinase (391 aa).

Substrate is bound at residue 34–37; it reads EHTD. 121-127 lines the ATP pocket; sequence GAGLSSS. Mg(2+)-binding residues include Ser-127 and Glu-159. Asp-171 (proton acceptor) is an active-site residue. Tyr-220 lines the substrate pocket.

This sequence belongs to the GHMP kinase family. GalK subfamily.

The protein localises to the cytoplasm. The enzyme catalyses alpha-D-galactose + ATP = alpha-D-galactose 1-phosphate + ADP + H(+). Its pathway is carbohydrate metabolism; galactose metabolism. Catalyzes the transfer of the gamma-phosphate of ATP to D-galactose to form alpha-D-galactose-1-phosphate (Gal-1-P). In Roseiflexus sp. (strain RS-1), this protein is Galactokinase.